Reading from the N-terminus, the 99-residue chain is Nucleoid-associated protein UUR10_0100 (99 aa).

Belongs to the YbaB/EbfC family. In terms of assembly, homodimer.

It is found in the cytoplasm. The protein localises to the nucleoid. Binds to DNA and alters its conformation. May be involved in regulation of gene expression, nucleoid organization and DNA protection. In Ureaplasma urealyticum serovar 10 (strain ATCC 33699 / Western), this protein is Nucleoid-associated protein UUR10_0100.